Consider the following 55-residue polypeptide: MAKATTIKIKLLSTADTGYFYVTTKNSRTMTDKMTKTKYDPVAKKHVEFKEAKIK.

Belongs to the bacterial ribosomal protein bL33 family.

The chain is Large ribosomal subunit protein bL33 from Rhizobium meliloti (strain 1021) (Ensifer meliloti).